Here is a 598-residue protein sequence, read N- to C-terminus: MNELIKHKLELLPDSPGCYLHKDKEGTIIYVGKAKNLKKRVRSYFRGSHDTKTELLVSEIVDFEYIVTESDTEALLLEINLIQKNMPKYNIKLKDDKSYPFLKITNESFPRLVITRYIKKNDGLYFGPYPDSYTANEVKKLLDRIFPFKKCKNPINKVCFYYHLGQCCAHTICHTDKAYWDRLIDDVKHFLNGKDDKIIEDLRSKMLAASKEMAFERAAEYRDLISGIATMRTKQRVMSKDLQDRDIFGYYVDKGWMCVQVFFVRQGKLIQRDVNLFPYYTDAEEDFLTYMGQFYQDKQHFIPKEVFIPEAIDEELVAAIVPTKIIKPKRGEKKQLVALATKNARVSLQQKFDLLEKDIKKTSGAIENLGQLLRIDKPVRIEAFDNSNIQGTSPVAAMVVFVDGKPSKKDYRKFKIKTVVGPDDYASMREVLFRRYSRVKKEGLQAPNLIIVDGGVGQVNVAKDVIEKQLGLTIPVAGLQKNDKHQTHDLLFGNPLEVVPLPRRSEEFFLLHRIQDEVHRFAVTFHRQVRRKNSFSSTLDHISGLGPKRKQLLLRHFKTITAIASATSEEIQALGIPKTVVEAIQQQITDNKNDRSSP.

In terms of domain architecture, GIY-YIG spans 14–91 (DSPGCYLHKD…IQKNMPKYNI (78 aa)). Positions 196 to 231 (DKIIEDLRSKMLAASKEMAFERAAEYRDLISGIATM) constitute a UVR domain.

It belongs to the UvrC family. As to quaternary structure, interacts with UvrB in an incision complex.

It localises to the cytoplasm. Functionally, the UvrABC repair system catalyzes the recognition and processing of DNA lesions. UvrC both incises the 5' and 3' sides of the lesion. The N-terminal half is responsible for the 3' incision and the C-terminal half is responsible for the 5' incision. The chain is UvrABC system protein C from Streptococcus pyogenes serotype M1.